We begin with the raw amino-acid sequence, 242 residues long: Hairy and enhancer of split-related protein HELT (242 aa).

Residues 10–65 (RTPVSHKVIEKRRRDRINRCLNELGKTVPMALAKQSSGKLEKAEILEMTVQYLRAL) form the bHLH domain. Lys-48 carries the post-translational modification N6-acetyllysine. Residues 87–122 (FHYGYHECMKNLVHYLTTVERMETKDTKYARILAFL) form the Orange domain.

Belongs to the HEY family. As to quaternary structure, self-associates. Interacts with HES5 and HEY2.

It localises to the nucleus. Functionally, transcriptional repressor which binds preferentially to the canonical E box sequence 5'-CACGCG-3'. The protein is Hairy and enhancer of split-related protein HELT (HELT) of Homo sapiens (Human).